Here is a 182-residue protein sequence, read N- to C-terminus: Crossover junction endodeoxyribonuclease RuvC (182 aa).

Residues Asp7, Glu67, and Asp139 contribute to the active site. The Mg(2+) site is built by Asp7, Glu67, and Asp139.

This sequence belongs to the RuvC family. Homodimer which binds Holliday junction (HJ) DNA. The HJ becomes 2-fold symmetrical on binding to RuvC with unstacked arms; it has a different conformation from HJ DNA in complex with RuvA. In the full resolvosome a probable DNA-RuvA(4)-RuvB(12)-RuvC(2) complex forms which resolves the HJ. The cofactor is Mg(2+).

It is found in the cytoplasm. The catalysed reaction is Endonucleolytic cleavage at a junction such as a reciprocal single-stranded crossover between two homologous DNA duplexes (Holliday junction).. Functionally, the RuvA-RuvB-RuvC complex processes Holliday junction (HJ) DNA during genetic recombination and DNA repair. Endonuclease that resolves HJ intermediates. Cleaves cruciform DNA by making single-stranded nicks across the HJ at symmetrical positions within the homologous arms, yielding a 5'-phosphate and a 3'-hydroxyl group; requires a central core of homology in the junction. The consensus cleavage sequence is 5'-(A/T)TT(C/G)-3'. Cleavage occurs on the 3'-side of the TT dinucleotide at the point of strand exchange. HJ branch migration catalyzed by RuvA-RuvB allows RuvC to scan DNA until it finds its consensus sequence, where it cleaves and resolves the cruciform DNA. The protein is Crossover junction endodeoxyribonuclease RuvC of Bordetella pertussis (strain Tohama I / ATCC BAA-589 / NCTC 13251).